We begin with the raw amino-acid sequence, 343 residues long: Interferon-inducible protein AIM2 (343 aa).

The Pyrin domain maps to methionine 1 to lysine 87. The region spanning methionine 138 to isoleucine 337 is the HIN-200 domain.

It belongs to the HIN-200 family. As to quaternary structure, self-associates; forms homooligomers in response to cytosolic double-stranded DNA (dsDNA) and the dsDNA seems to serve as oligomerization platform. Component of AIM2 inflammasome, which consists of a signal sensor component (AIM2), an adapter (PYCARD/ASC), which recruits an effector pro-inflammatory caspase (CASP1). Interacts (via pyrin domain) with PYCARD/ASC (via pyrin domain); interaction is direct. Component of the AIM2 PANoptosome complex, a multiprotein complex that drives inflammatory cell death (PANoptosis). Interacts with PYDC5; disrupts assembly of the AIM2 inflammasome complex. Interacts with EIF2AK2/PKR. Interacts with MAPRE1. Interacts with IFI16. Interacts with isoform IFI16-beta of IFI16; preventing the interaction between AIM2 and PYCARD/ASC. Interacts with RACK1; promoting association with PP2A phosphatase and dephosphorylation of AKT1. Interacts with TRIM11; promoting AIM2 recruitment to autophagosomes and autophagy-dependent degradation. In terms of assembly, (Microbial infection) Interacts with human herpesvirus 8 protein SOX/ORF37; this interaction inhibits AIM2 polymerization and subsequent inflammasome activation. Post-translationally, degraded via selective autophagy following interaction with TRIM11. In terms of tissue distribution, expressed in spleen, small intestine, peripheral blood leukocytes, and testis.

It localises to the cytoplasm. It is found in the inflammasome. The protein resides in the nucleus. Its activity is regulated as follows. Inactive in absence of double-stranded DNA (dsDNA). Homooligomerizes upon binding to dsDNA, dsDNA serving as an oligomerization platform. AIM2 requires large dsDNA to generate a structural template that couples dsDNA ligand-binding and homooligomerization. Homooligomerization is followed by recruitment of PYCARD/ASC to initiate speck formation (nucleation). AIM2 and PYCARD/ASC homooligomer filaments assemble bidirectionally and the recognition between AIM2 and PYCARD/ASC oligomers occurs in a head-to-tail manner. Clustered PYCARD/ASC nucleates the formation of CASP1 filaments through the interaction of their respective CARD domains, acting as a platform for CASP1 polymerization and activation. Active CASP1 then specifically processes protein precursors, such as gasdermin-D (GSDMD), IL1B and IL18, leading to the release of mature cytokines in the extracellular milieu or pyroptosis, depending on cell type. AIM2 can be activated in response to events that cause genomic DNA (HIV protease inhibitor nelfinavir) or mitochondrial DNA release in the cytoplasm (such as Perfluoroalkyl substance pollutants or cholesterol overload). Activation of the AIM2 inflammasome is inhibited by isoform IFI16-beta of IFI16, which prevents the interaction between AIM2 and PYCARD/ASC. Activation of the AIM2 inflammasome is inhibited by TRIM11, which promotes autophagy-dependent degradation of AIM2. In terms of biological role, sensor component of the AIM2 inflammasome, which mediates inflammasome activation in response to the presence of double-stranded DNA (dsDNA) in the cytosol, leading to subsequent pyroptosis. Inflammasomes are supramolecular complexes that assemble in the cytosol in response to pathogens and other damage-associated signals and play critical roles in innate immunity and inflammation. Acts as a recognition receptor (PRR): specifically recognizes and binds dsDNA in the cytosol, and mediates the formation of the inflammasome polymeric complex composed of AIM2, CASP1 and PYCARD/ASC. Recruitment of pro-caspase-1 (proCASP1) to the AIM2 inflammasome promotes caspase-1 (CASP1) activation, which subsequently cleaves and activates inflammatory cytokines IL1B and IL18 and gasdermin-D (GSDMD), promoting cytokine secretion. In some cells, CASP1 activation mediates cleavage and activation of GSDMD, triggering pyroptosis without promoting cytokine secretion. Detects cytosolic dsDNA of viral and bacterial origin in a non-sequence-specific manner. Involved in the DNA damage response caused by acute ionizing radiation by mediating pyroptosis of intestinal epithelial cells and bone marrow cells in response to double-strand DNA breaks. Mechanistically, AIM2 senses DNA damage in the nucleus to mediate inflammasome assembly and inflammatory cell death. Also acts as a regulator of neurodevelopment via its role in the DNA damage response: acts by promoting neural cell death in response to DNA damage in the developing brain, thereby purging genetically compromised cells of the central nervous system. Pyroptosis mediated by the AIM2 inflammasome in response to DNA damage is dependent on GSDMD without involving IL1B and IL18 cytokine secretion. Also acts as a mediator of pyroptosis, necroptosis and apoptosis (PANoptosis), an integral part of host defense against pathogens, in response to bacterial infection. Can also trigger PYCARD/ASC-dependent, caspase-1-independent cell death that involves caspase-8 (CASP8). Its function is as follows. Also acts as a tumor suppressor independently of its role in inflammatory response. Able to suppress overt cell proliferation in enterocytes: restricts stem cell proliferation in the intestinal mucosa in an inflammasome-independent manner, contributing to a decrease in the likelihood of colorectal cancer development. AIM2 suppresses cell proliferation by inhibiting phosphorylation of AKT1 at 'Ser-473', preventing AKT1 activation and AKT-mTOR signaling pathway. Inhibits AKT1 phosphorylation both by inhibiting the activity of PRKDC/DNA-PK kinase and promoting dephosphorylation by PP2A phosphatase. Also acts as a key regulator of regulatory T-cells (Treg) homeostasis by promoting their stability: acts by preventing AKT1 activation. Its role in Treg homeostasis is important to restain autoimmune diseases. This Homo sapiens (Human) protein is Interferon-inducible protein AIM2.